Here is a 157-residue protein sequence, read N- to C-terminus: SsrA-binding protein (157 aa).

It belongs to the SmpB family.

It localises to the cytoplasm. Functionally, required for rescue of stalled ribosomes mediated by trans-translation. Binds to transfer-messenger RNA (tmRNA), required for stable association of tmRNA with ribosomes. tmRNA and SmpB together mimic tRNA shape, replacing the anticodon stem-loop with SmpB. tmRNA is encoded by the ssrA gene; the 2 termini fold to resemble tRNA(Ala) and it encodes a 'tag peptide', a short internal open reading frame. During trans-translation Ala-aminoacylated tmRNA acts like a tRNA, entering the A-site of stalled ribosomes, displacing the stalled mRNA. The ribosome then switches to translate the ORF on the tmRNA; the nascent peptide is terminated with the 'tag peptide' encoded by the tmRNA and targeted for degradation. The ribosome is freed to recommence translation, which seems to be the essential function of trans-translation. This Chlorobium luteolum (strain DSM 273 / BCRC 81028 / 2530) (Pelodictyon luteolum) protein is SsrA-binding protein.